Reading from the N-terminus, the 187-residue chain is Hypoxanthine/guanine phosphoribosyltransferase (187 aa).

It belongs to the purine/pyrimidine phosphoribosyltransferase family. Archaeal HPRT subfamily. In terms of assembly, homodimer.

Its subcellular location is the cytoplasm. It carries out the reaction IMP + diphosphate = hypoxanthine + 5-phospho-alpha-D-ribose 1-diphosphate. The catalysed reaction is GMP + diphosphate = guanine + 5-phospho-alpha-D-ribose 1-diphosphate. Its pathway is purine metabolism; IMP biosynthesis via salvage pathway; IMP from hypoxanthine: step 1/1. Its function is as follows. Catalyzes a salvage reaction resulting in the formation of IMP that is energically less costly than de novo synthesis. The sequence is that of Hypoxanthine/guanine phosphoribosyltransferase from Methanopyrus kandleri (strain AV19 / DSM 6324 / JCM 9639 / NBRC 100938).